The chain runs to 436 residues: Glutamyl-tRNA(Gln) amidotransferase subunit D (436 aa).

The 330-residue stretch at 91–420 folds into the Asparaginase/glutaminase domain; that stretch reads QNISIISTGG…GEVAKLMNKN (330 aa). Catalysis depends on residues Thr-101, Thr-177, Asp-178, and Lys-254.

It belongs to the asparaginase 1 family. GatD subfamily. In terms of assembly, heterodimer of GatD and GatE.

It catalyses the reaction L-glutamyl-tRNA(Gln) + L-glutamine + ATP + H2O = L-glutaminyl-tRNA(Gln) + L-glutamate + ADP + phosphate + H(+). Functionally, allows the formation of correctly charged Gln-tRNA(Gln) through the transamidation of misacylated Glu-tRNA(Gln) in organisms which lack glutaminyl-tRNA synthetase. The reaction takes place in the presence of glutamine and ATP through an activated gamma-phospho-Glu-tRNA(Gln). The GatDE system is specific for glutamate and does not act on aspartate. This chain is Glutamyl-tRNA(Gln) amidotransferase subunit D, found in Methanobrevibacter smithii (strain ATCC 35061 / DSM 861 / OCM 144 / PS).